A 295-amino-acid polypeptide reads, in one-letter code: Methylamine utilization protein MauJ (295 aa).

It participates in one-carbon metabolism; methylamine degradation. The polypeptide is Methylamine utilization protein MauJ (mauJ) (Methylorubrum extorquens (strain ATCC 14718 / DSM 1338 / JCM 2805 / NCIMB 9133 / AM1) (Methylobacterium extorquens)).